Here is a 628-residue protein sequence, read N- to C-terminus: Patulin synthase (628 aa).

Residues 1–19 (MRLTSGIFHAAIAVAAVGA) form the signal peptide. N-linked (GlcNAc...) asparagine glycosylation occurs at asparagine 49. Residues 61–62 (TA) and 82–83 (EA) each bind FAD. N-linked (GlcNAc...) asparagine glycosylation is present at asparagine 93. FAD is bound at residue 148–151 (NYMA). N-linked (GlcNAc...) asparagine glycans are attached at residues asparagine 198, asparagine 261, asparagine 283, asparagine 429, asparagine 486, and asparagine 526. Residue histidine 564 is the Proton acceptor of the active site. Residue asparagine 575 is glycosylated (N-linked (GlcNAc...) asparagine). FAD-binding positions include alanine 598 and 609–610 (PQ).

The protein belongs to the GMC oxidoreductase family. Requires FAD as cofactor.

Its subcellular location is the cytoplasm. The protein resides in the cell cortex. It localises to the vacuole. It is found in the secreted. The protein localises to the cell wall. The catalysed reaction is (E)-ascladiol + A = patulin + AH2. The protein operates within mycotoxin biosynthesis; patulin biosynthesis. Functionally, patulin synthase; part of the gene cluster that mediates the biosynthesis of patulin, an acetate-derived tetraketide mycotoxin produced by several fungal species that shows antimicrobial properties against several bacteria. PatE catalyzes the last step of the pathway which is the conversion of E-ascladiol to patulin. The pathway begins with the synthesis of 6-methylsalicylic acid by the polyketide synthase (PKS) patK via condensation of acetate and malonate units. The 6-methylsalicylic acid decarboxylase patG then catalyzes the decarboxylation of 6-methylsalicylic acid to yield m-cresol (also known as 3-methylphenol). These first reactions occur in the cytosol. The intermediate m-cresol is then transported into the endoplasmic reticulum where the cytochrome P450 monooxygenase patH converts it to m-hydroxybenzyl alcohol, which is further converted to gentisyl alcohol by the cytochrome P450 monooxygenase patI. The oxidoreductases patJ and patO further convert gentisyl alcohol to isoepoxydon in the vacuole. PatN catalyzes then the transformation of isoepoxydon into phyllostine. The cluster protein patF is responsible for the conversion from phyllostine to neopatulin whereas the alcohol dehydrogenase patD converts neopatulin to E-ascladiol. The steps between isoepoxydon and E-ascladiol occur in the cytosol, and E-ascladiol is probably secreted to the extracellular space by one of the cluster-specific transporters patC or patM. Finally, the secreted patulin synthase patE catalyzes the conversion of E-ascladiol to patulin. The chain is Patulin synthase from Penicillium expansum (Blue mold rot fungus).